The primary structure comprises 588 residues: Endogenous retrovirus group K member 7 Env polyprotein (588 aa).

The fusion peptide stretch occupies residues 355–375; the sequence is FIFTLIAVIMGLIAVTATAAV. A helical membrane pass occupies residues 522-542; the sequence is IGSTTIINLILILVCLFCLLL.

This sequence belongs to the beta type-B retroviral envelope protein family. HERV class-II K(HML-2) env subfamily. As to quaternary structure, the surface (SU) and transmembrane (TM) proteins form a heterodimer. SU and TM are attached by noncovalent interactions or by a labile interchain disulfide bond. Specific enzymatic cleavages in vivo yield the mature SU and TM proteins. As to expression, expressed in lung, placenta, testis and peripheral blood lymphocytes.

The protein resides in the virion. It localises to the cell membrane. Functionally, retroviral envelope proteins mediate receptor recognition and membrane fusion during early infection. Endogenous envelope proteins may have kept, lost or modified their original function during evolution. Its function is as follows. SU mediates receptor recognition. In terms of biological role, TM anchors the envelope heterodimer to the viral membrane through one transmembrane domain. The other hydrophobic domain, called fusion peptide, mediates fusion of the viral membrane with the target cell membrane. In Homo sapiens (Human), this protein is Endogenous retrovirus group K member 7 Env polyprotein (ERVK-7).